We begin with the raw amino-acid sequence, 97 residues long: Large ribosomal subunit protein uL23 (97 aa).

This sequence belongs to the universal ribosomal protein uL23 family. Part of the 50S ribosomal subunit. Contacts protein L29, and trigger factor when it is bound to the ribosome.

Functionally, one of the early assembly proteins it binds 23S rRNA. One of the proteins that surrounds the polypeptide exit tunnel on the outside of the ribosome. Forms the main docking site for trigger factor binding to the ribosome. The chain is Large ribosomal subunit protein uL23 from Brucella melitensis biotype 2 (strain ATCC 23457).